We begin with the raw amino-acid sequence, 1427 residues long: Lysophospholipase NTE1 (1427 aa).

Residues Met-1–Ser-60 lie on the Cytoplasmic side of the membrane. A helical transmembrane segment spans residues Tyr-61–Ile-81. At Pro-82 to Ser-96 the chain is on the lumenal side. Residues Leu-97–Val-117 form a helical membrane-spanning segment. Topologically, residues Arg-118–Ile-1427 are cytoplasmic. Over residues Pro-281–Asp-296 the composition is skewed to polar residues. Positions Pro-281–Glu-315 are disordered. A nucleoside 3',5'-cyclic phosphate contacts are provided by residues Leu-615–Val-735 and Ser-731–Arg-870. The segment at Gly-787 to Thr-807 is disordered. The PNPLA domain maps to Leu-1124–Lys-1288. A GXGXXG motif is present at residues Gly-1128 to Gly-1133. The GXSXG motif lies at Gly-1155–Gly-1159. Ser-1157 serves as the catalytic Nucleophile. Asp-1275 functions as the Proton acceptor in the catalytic mechanism. The short motif at Asp-1275–Gly-1277 is the DGA/G element.

This sequence belongs to the NTE family.

The protein localises to the endoplasmic reticulum membrane. It carries out the reaction a 1-acyl-sn-glycero-3-phosphocholine + H2O = sn-glycerol 3-phosphocholine + a fatty acid + H(+). With respect to regulation, inhibited by organophosphorus esters. Its function is as follows. Intracellular phospholipase B that catalyzes the double deacylation of phosphatidylcholine (PC) to glycerophosphocholine (GroPCho). Plays an important role in membrane lipid homeostasis. Responsible for the rapid PC turnover in response to inositol, elevated temperatures, or when choline is present in the growth medium. This chain is Lysophospholipase NTE1 (NTE1), found in Yarrowia lipolytica (strain CLIB 122 / E 150) (Yeast).